The sequence spans 343 residues: NADH-quinone oxidoreductase subunit H (343 aa).

8 consecutive transmembrane segments (helical) span residues V19 to Y39, A89 to I109, L124 to A144, A158 to A178, W198 to T218, I257 to F277, P279 to F299, and L314 to M334.

The protein belongs to the complex I subunit 1 family. NDH-1 is composed of 14 different subunits. Subunits NuoA, H, J, K, L, M, N constitute the membrane sector of the complex.

It is found in the cell inner membrane. It carries out the reaction a quinone + NADH + 5 H(+)(in) = a quinol + NAD(+) + 4 H(+)(out). NDH-1 shuttles electrons from NADH, via FMN and iron-sulfur (Fe-S) centers, to quinones in the respiratory chain. The immediate electron acceptor for the enzyme in this species is believed to be ubiquinone. Couples the redox reaction to proton translocation (for every two electrons transferred, four hydrogen ions are translocated across the cytoplasmic membrane), and thus conserves the redox energy in a proton gradient. This subunit may bind ubiquinone. The polypeptide is NADH-quinone oxidoreductase subunit H (Thiobacillus denitrificans (strain ATCC 25259 / T1)).